Reading from the N-terminus, the 271-residue chain is 4-hydroxy-tetrahydrodipicolinate reductase (271 aa).

NAD(+) contacts are provided by residues 11 to 16 and Glu37; that span reads GGSGRM. Residue Arg38 coordinates NADP(+). NAD(+)-binding positions include 101–103 and 125–128; these read GTT and APNM. The active-site Proton donor/acceptor is His158. His159 provides a ligand contact to (S)-2,3,4,5-tetrahydrodipicolinate. The Proton donor role is filled by Lys162. 168 to 169 is a (S)-2,3,4,5-tetrahydrodipicolinate binding site; sequence GT.

Belongs to the DapB family.

The protein localises to the cytoplasm. The enzyme catalyses (S)-2,3,4,5-tetrahydrodipicolinate + NAD(+) + H2O = (2S,4S)-4-hydroxy-2,3,4,5-tetrahydrodipicolinate + NADH + H(+). It carries out the reaction (S)-2,3,4,5-tetrahydrodipicolinate + NADP(+) + H2O = (2S,4S)-4-hydroxy-2,3,4,5-tetrahydrodipicolinate + NADPH + H(+). It functions in the pathway amino-acid biosynthesis; L-lysine biosynthesis via DAP pathway; (S)-tetrahydrodipicolinate from L-aspartate: step 4/4. Functionally, catalyzes the conversion of 4-hydroxy-tetrahydrodipicolinate (HTPA) to tetrahydrodipicolinate. This Shewanella halifaxensis (strain HAW-EB4) protein is 4-hydroxy-tetrahydrodipicolinate reductase.